A 139-amino-acid polypeptide reads, in one-letter code: Protein cornichon homolog 4 (139 aa).

Transmembrane regions (helical) follow at residues 5–25, 57–77, and 118–138; these read VFVFSLLDCCALIFLSVYFII, LVTVLMLISLHWFIFLLNLPV, and LGFHLLCFFMYLYSMILALIN.

Belongs to the cornichon family. As to quaternary structure, interacts with Sec23/24 complex components SEC24B and SEC24D. Interacts with CCR5. Interacts with ADRB2 in the early secretory pathway.

The protein resides in the membrane. It is found in the endoplasmic reticulum. Its subcellular location is the endoplasmic reticulum-Golgi intermediate compartment. Involved in G protein-coupled receptors (GPCRs) trafficking from the endoplasmic reticulum to the cell surface; it promotes the exit of GPCRs from the early secretory pathway, likely through interaction with the COPII machinery. The polypeptide is Protein cornichon homolog 4 (CNIH4) (Bos taurus (Bovine)).